A 66-amino-acid polypeptide reads, in one-letter code: Ejaculatory bulb-specific protein 2 (66 aa).

A signal peptide spans 1 to 20 (MIRILVLMITFTLMTGSALC).

In terms of tissue distribution, specifically expressed in the ejaculatory bulb and seminal fluid.

It localises to the secreted. Functionally, protein component of the posterior mating plug. The chain is Ejaculatory bulb-specific protein 2 from Drosophila melanogaster (Fruit fly).